Here is a 332-residue protein sequence, read N- to C-terminus: Anthranilate phosphoribosyltransferase (332 aa).

5-phospho-alpha-D-ribose 1-diphosphate contacts are provided by residues glycine 79, 82–83, serine 87, 89–92, 107–115, and serine 119; these read GD, NIST, and KHGNRSVSS. Glycine 79 is an anthranilate binding site. Serine 91 serves as a coordination point for Mg(2+). An anthranilate-binding site is contributed by asparagine 110. Anthranilate is bound at residue arginine 165. Positions 223 and 224 each coordinate Mg(2+).

Belongs to the anthranilate phosphoribosyltransferase family. In terms of assembly, homodimer. Mg(2+) is required as a cofactor.

It carries out the reaction N-(5-phospho-beta-D-ribosyl)anthranilate + diphosphate = 5-phospho-alpha-D-ribose 1-diphosphate + anthranilate. It functions in the pathway amino-acid biosynthesis; L-tryptophan biosynthesis; L-tryptophan from chorismate: step 2/5. In terms of biological role, catalyzes the transfer of the phosphoribosyl group of 5-phosphorylribose-1-pyrophosphate (PRPP) to anthranilate to yield N-(5'-phosphoribosyl)-anthranilate (PRA). This Photorhabdus laumondii subsp. laumondii (strain DSM 15139 / CIP 105565 / TT01) (Photorhabdus luminescens subsp. laumondii) protein is Anthranilate phosphoribosyltransferase.